The primary structure comprises 385 residues: MVPVRGQITAFRCSQNPTKTIWRTLATAEPPKPKRKRTMFTDKLNQGPSFADFVSGKASNMTIDPLEAARQDPDQRLPSWLKVPIPKGKSFHTLKKDVRELKLATVCEEAKCPNIGECWGGKKSEATATIMLMGDTCTRGCRFCSVKTSRKPAPPDPMEPENTAEAISRWGLGYVVLTTVDRDDLVDGGAHHLAETVRKIKEKAPQILVEVLGGDFRGDLDMASVLARSGLDVYAHNIETVEDLTPHVRDRRATYRQSLSILQRAKETKPSLVTKTSMMLGFGETDEQIMQTLRDLREIKCDVVTFGQYMRPTKRHMKVVEYVTPEKFDYWRDTALKMGFLYVASGPLVRSSYKAGEAFIENVIRKRNHNVGETPRLESASAAQL.

[4Fe-4S] cluster contacts are provided by C107, C112, C118, C137, C141, C144, and S352. The Radical SAM core domain occupies 122–341 (KKSEATATIM…RDTALKMGFL (220 aa)).

This sequence belongs to the radical SAM superfamily. Lipoyl synthase family. [4Fe-4S] cluster serves as cofactor.

The protein resides in the mitochondrion. It catalyses the reaction [[Fe-S] cluster scaffold protein carrying a second [4Fe-4S](2+) cluster] + N(6)-octanoyl-L-lysyl-[protein] + 2 oxidized [2Fe-2S]-[ferredoxin] + 2 S-adenosyl-L-methionine + 4 H(+) = [[Fe-S] cluster scaffold protein] + N(6)-[(R)-dihydrolipoyl]-L-lysyl-[protein] + 4 Fe(3+) + 2 hydrogen sulfide + 2 5'-deoxyadenosine + 2 L-methionine + 2 reduced [2Fe-2S]-[ferredoxin]. It participates in protein modification; protein lipoylation via endogenous pathway; protein N(6)-(lipoyl)lysine from octanoyl-[acyl-carrier-protein]: step 2/2. Its function is as follows. Catalyzes the radical-mediated insertion of two sulfur atoms into the C-6 and C-8 positions of the octanoyl moiety bound to the lipoyl domains of lipoate-dependent enzymes, thereby converting the octanoylated domains into lipoylated derivatives. In Meyerozyma guilliermondii (strain ATCC 6260 / CBS 566 / DSM 6381 / JCM 1539 / NBRC 10279 / NRRL Y-324) (Yeast), this protein is Lipoyl synthase, mitochondrial.